The primary structure comprises 220 residues: UPF0502 protein Pnap_3223 (220 aa).

Belongs to the UPF0502 family.

In Polaromonas naphthalenivorans (strain CJ2), this protein is UPF0502 protein Pnap_3223.